The primary structure comprises 156 residues: Arginine repressor (156 aa).

It belongs to the ArgR family.

It is found in the cytoplasm. Its pathway is amino-acid biosynthesis; L-arginine biosynthesis [regulation]. In terms of biological role, regulates arginine biosynthesis genes. This chain is Arginine repressor, found in Yersinia enterocolitica serotype O:8 / biotype 1B (strain NCTC 13174 / 8081).